We begin with the raw amino-acid sequence, 1239 residues long: DNA topoisomerase 2 (1239 aa).

ATP is bound by residues asparagine 65, asparagine 96, 124–126 (SSN), 137–144 (GRHGYGAK), and 354–356 (QSK). A Toprim domain is found at 434–548 (RTLIVTEGDS…SLLQHNPGYI (115 aa)). Mg(2+) contacts are provided by glutamate 440, aspartate 517, and aspartate 519. A Topo IIA-type catalytic domain is found at 685–1101 (IPHCVDGLKP…TPVKMWLTDL (417 aa)). The active-site O-(5'-phospho-DNA)-tyrosine intermediate is tyrosine 775. Positions 956 to 965 (ALSQRIYING) are interaction with DNA. The segment at 1167–1206 (PASKRKPEDTYGGALSSGGSTRNVGKRLTGARGAKKKKVV) is disordered.

Belongs to the type II topoisomerase family. In terms of assembly, homodimer. Mg(2+) serves as cofactor. The cofactor is Mn(2+). Requires Ca(2+) as cofactor.

Its subcellular location is the nucleus. The protein resides in the mitochondrion matrix. It localises to the kinetoplast. The catalysed reaction is ATP-dependent breakage, passage and rejoining of double-stranded DNA.. Its function is as follows. Control of topological states of DNA by transient breakage and subsequent rejoining of DNA strands. Topoisomerase II makes double-strand breaks. This Crithidia fasciculata protein is DNA topoisomerase 2 (TOP2).